A 141-amino-acid polypeptide reads, in one-letter code: MLTAEDKKLIQQAWEKASSHQEDFGAEALLRMFTAYPQTKTYFPHFDLSPGSDQIRGHGKKVLAALGNAVKNIDDLSQAMAELSNLHAFNLRVDPVNFKLLSQCIQVVLAAHMGKDYSPEVHAAFDKFLSAVAAVLAGKYR.

One can recognise a Globin domain in the interval 1 to 141 (MLTAEDKKLI…VAAVLAGKYR (141 aa)). His58 and His87 together coordinate heme b.

This sequence belongs to the globin family. In terms of assembly, heterotetramer of two alpha-D chains and two beta chains. As to expression, red blood cells.

Its function is as follows. Involved in oxygen transport from the lung to the various peripheral tissues. This is Hemoglobin subunit alpha-D (HBAD) from Coturnix japonica (Japanese quail).